We begin with the raw amino-acid sequence, 179 residues long: DELTA-miturgitoxin-Cp2a (179 aa).

Positions 1–20 are cleaved as a signal peptide; that stretch reads MKFSLFFGVLFLAILHSCLS. Residues 21 to 47 constitute a propeptide that is removed on maturation; it reads ESEKDLTDEDHFRSSDSFLSEIQEESR. The Processing quadruplet motif signature appears at 44 to 47; that stretch reads EESR. 8 disulfides stabilise this stretch: Cys51–Cys66, Cys58–Cys75, Cys65–Cys88, Cys77–Cys86, Cys115–Cys130, Cys122–Cys139, Cys129–Cys158, and Cys141–Cys156. The residue at position 178 (Val178) is a Valine amide.

The protein belongs to the spider toxin CSTX family. Double-CSTX subfamily. In terms of processing, cleavage of the propeptide depends on the processing quadruplet motif (XXXR, with at least one of X being E). Expressed by the venom gland.

It is found in the secreted. In terms of biological role, spider venom toxin that exhibits cytolytic activity by forming an alpha-helix across the membrane. Lethal to insect larvae. In Cheiracanthium punctorium (Yellow sac spider), this protein is DELTA-miturgitoxin-Cp2a.